The sequence spans 900 residues: Vacuolar membrane protein pep3 (900 aa).

Positions 1 to 20 (MSLAEDWIDPNSSEDSDIQE) are disordered. 4 TPR repeats span residues 314–345 (HLAFLDLDTLYIVNRVNGKESYQQRVNLSPHE), 373–406 (NNETREASLVFLEKGDFEKALECANTAKVRNTVL), 408–436 (GYAEFLMEHEEYERAATLYAETLKSVEEV), and 546–579 (MKDQSYIMHYWVQRENYEKALETLNEGVSQETLI). A CHCR repeat occupies 602–756 (DLDVHALIPS…MFSKKSGIKE (155 aa)). The RING-type; atypical zinc-finger motif lies at 837–884 (CWHCNQPLFSEPFVLFPCQHAFHRSCMLEKTYKLASEKNILKECQLCG).

Belongs to the VPS18 family.

The protein resides in the vacuole membrane. Its function is as follows. Required for vacuolar biogenesis. The protein is Vacuolar membrane protein pep3 (pep3) of Schizosaccharomyces pombe (strain 972 / ATCC 24843) (Fission yeast).